The sequence spans 644 residues: Exoribonuclease 2 (644 aa).

An RNB domain is found at 189-516 (RQDLTALNFV…NHRLLKAVIK (328 aa)). Residues 561 to 643 (NTRFAAEIID…ETRSIIARPA (83 aa)) enclose the S1 motif domain.

It belongs to the RNR ribonuclease family. RNase II subfamily.

It localises to the cytoplasm. The enzyme catalyses Exonucleolytic cleavage in the 3'- to 5'-direction to yield nucleoside 5'-phosphates.. Functionally, involved in mRNA degradation. Hydrolyzes single-stranded polyribonucleotides processively in the 3' to 5' direction. The chain is Exoribonuclease 2 from Salmonella newport (strain SL254).